Reading from the N-terminus, the 1716-residue chain is Histone-lysine N-methyltransferase SETD1A (1716 aa).

Positions 60–89 are interaction with WDR82; sequence LQDPRCHVRSKARDFSLPVPKFKLDEFYIG. Residues 84–172 enclose the RRM domain; the sequence is DEFYIGQIPL…NIIHAQLDIK (89 aa). Disordered regions lie at residues 194 to 367, 380 to 499, 516 to 670, 849 to 869, 911 to 1206, 1230 to 1259, and 1275 to 1297; these read PTGG…SSYP, TSYP…AQHS, FSFL…PPPH, AKPF…EKMK, KRKE…SRKV, EEVA…GTEV, and GLAT…AERP. Low complexity predominate over residues 222–231; it reads SDTAAYPAGT. Residues 243-277 are compositionally biased toward polar residues; it reads CSQDTNFSSSRQDTPSSFGQFTPQSSQGTPYTSRG. 2 stretches are compositionally biased toward low complexity: residues 278–295 and 315–357; these read STPY…TSTS and STSS…SSAS. Positions 430–440 are enriched in pro residues; that stretch reads SEAPPPEPPEP. Residues 441–461 show a composition bias toward gly residues; the sequence is GGGGGGSGGGGGGGGGGGGGA. The residue at position 477 (S477) is a Phosphoserine. The span at 477–487 shows a compositional bias: low complexity; sequence SPARSGSPAPE. Over residues 488–499 the composition is skewed to polar residues; that stretch reads TTNESVPFAQHS. A phosphoserine mark is found at S521 and S578. The span at 581-591 shows a compositional bias: polar residues; sequence ANGQNQASPCS. Composition is skewed to pro residues over residues 606 to 631 and 638 to 670; these read SPPP…PPPY and GYPP…PPPH. Positions 859–869 are enriched in basic and acidic residues; that stretch reads QAKEEDKEKMK. S930 is subject to Phosphoserine. Acidic residues-rich tracts occupy residues 991 to 1009 and 1018 to 1027; these read KDED…EEAV and ASDGEDEDSD. The segment covering 1028-1071 has biased composition (low complexity); sequence SSSQCSLYADSDGENGSTSDSESGSSSSSSSSSSSSSSSSSSES. The residue at position 1110 (S1110) is a Phosphoserine. Residues 1130–1150 are compositionally biased toward pro residues; the sequence is EEPPPSVPQPPAEPPAGPPDA. The segment covering 1283 to 1292 has biased composition (acidic residues); sequence DDSEATETSD. Positions 1307–1311 match the HCFC1-binding motif (HBM) motif; it reads EHNYA. Disordered regions lie at residues 1355–1427 and 1480–1508; these read EEPK…FEPR and TNLS…SEGY. Positions 1369 to 1383 are enriched in acidic residues; it reads EGEEEEEDEEEESES. The span at 1399–1412 shows a compositional bias: basic residues; the sequence is RRRSLRSHTRRRRP. Residues 1413–1424 are compositionally biased toward pro residues; that stretch reads PLPPPPPPPPSF. Residues 1424–1459 form an interaction with CFP1 region; that stretch reads FEPRSEFEQMTILYDIWNSGLDLEDMSYLRLTYERL. The segment at 1459-1546 is interaction with ASH2L, RBBP5 and WDR5; the sequence is LLQQTSGADW…GTNRVLSERR (88 aa). The WDR5 interaction motif (WIN) signature appears at 1501-1506; it reads GSARSE. Residues 1546–1551 carry the RxxxRR motif motif; it reads RSEQRR. Residues 1577 to 1694 form the SET domain; that stretch reads KKLRFGRSRI…VDEEITYDYK (118 aa). S-adenosyl-L-methionine is bound at residue Y1693. One can recognise a Post-SET domain in the interval 1700–1716; it reads NKIPCLCGTESCRGSLN.

It belongs to the class V-like SAM-binding methyltransferase superfamily. Component of the SET1A/COMPASS complex composed of the catalytic subunit SETD1A, WDR5, WDR82, RBBP5, ASH2L/ASH2, CXXC1/CFP1, HCFC1 and DPY30 homotrimer. Forms a core complex with the evolutionary conserved subcomplex WRAD composed of WDR5, RBBP5, ASH2L/ASH2 and DPY30 subunits; WRAD differentially stimulates the methyltransferase activity. Interacts with BOD1L1 (via COMPASS-Shg1 domain) at replication forks. Interacts with HCFC1. Interacts with ASH2/ASH2L. Interacts with CXXC1/CFP1. Interacts with RBBP5. Interacts (via N-terminal region) with WDR82; the interaction is direct. Interacts (via the RRM domain) with hyperphosphorylated C-terminal domain (CTD) of RNA polymerase II large subunit (POLR2A) only in the presence of WDR82. Binds specifically to CTD heptad repeats phosphorylated on 'Ser-5' of each heptad. Interacts with ZNF335. Interacts with SUPT6H. Interacts with NAP1L1. Interacts (via WIN motif) with WDR5.

It is found in the nucleus. The protein resides in the nucleus speckle. It localises to the chromosome. Its subcellular location is the cytoplasm. It carries out the reaction L-lysyl(4)-[histone H3] + S-adenosyl-L-methionine = N(6)-methyl-L-lysyl(4)-[histone H3] + S-adenosyl-L-homocysteine + H(+). It catalyses the reaction N(6)-methyl-L-lysyl(4)-[histone H3] + S-adenosyl-L-methionine = N(6),N(6)-dimethyl-L-lysyl(4)-[histone H3] + S-adenosyl-L-homocysteine + H(+). The catalysed reaction is N(6),N(6)-dimethyl-L-lysyl(4)-[histone H3] + S-adenosyl-L-methionine = N(6),N(6),N(6)-trimethyl-L-lysyl(4)-[histone H3] + S-adenosyl-L-homocysteine + H(+). Functionally, histone methyltransferase that catalyzes methyl group transfer from S-adenosyl-L-methionine to the epsilon-amino group of 'Lys-4' of histone H3 (H3K4) via a non-processive mechanism. Part of chromatin remodeling machinery, forms H3K4me1, H3K4me2 and H3K4me3 methylation marks at active chromatin sites where transcription and DNA repair take place. Responsible for H3K4me3 enriched promoters and transcriptional programming of inner mass stem cells and neuron progenitors during embryogenesis. Required for H3K4me1 mark at stalled replication forks. Mediates FANCD2-dependent nucleosome remodeling and RAD51 nucleofilaments stabilization at reversed forks, protecting them from nucleolytic degradation. Does not methylate 'Lys-4' of histone H3 if the neighboring 'Lys-9' residue is already methylated. Has RNA binding activity towards transcripts involved in RNA processing and the DNA damage response. The chain is Histone-lysine N-methyltransferase SETD1A (Setd1a) from Mus musculus (Mouse).